The primary structure comprises 613 residues: Probable inactive purple acid phosphatase 1 (613 aa).

A signal peptide spans 1 to 24; it reads MRESLVAILVTVISVLGAIHQVKS. N-linked (GlcNAc...) asparagine glycans are attached at residues asparagine 89 and asparagine 116. Aspartate 295 contacts Fe cation. Residue asparagine 316 is glycosylated (N-linked (GlcNAc...) asparagine). Fe cation contacts are provided by aspartate 336 and tyrosine 339. Aspartate 336 is a Zn(2+) binding site. 3 residues coordinate Zn(2+): asparagine 369, histidine 458, and histidine 500. Asparagine 369 is a binding site for substrate. 500 to 502 provides a ligand contact to substrate; that stretch reads HAH. Histidine 502 provides a ligand contact to Fe cation. 2 N-linked (GlcNAc...) asparagine glycosylation sites follow: asparagine 528 and asparagine 551.

The protein belongs to the metallophosphoesterase superfamily. Purple acid phosphatase family. Homodimer. Requires Fe cation as cofactor. Zn(2+) serves as cofactor. As to expression, expressed in roots, stems, leaves, flowers and siliques.

It localises to the secreted. The chain is Probable inactive purple acid phosphatase 1 (PAP1) from Arabidopsis thaliana (Mouse-ear cress).